A 539-amino-acid chain; its full sequence is 3-hydroxy-3-methylglutaryl-coenzyme A reductase 1 (539 aa).

Residues 63-83 traverse the membrane as a helical segment; that stretch reads FATVVCQLASVVYLLSLFAHP. The linker stretch occupies residues 84–124; it reads DAPATTTGDDDDGQGGSRRARPAAAEPAPMHGHGGGMMEAD. The interval 87–116 is disordered; the sequence is ATTTGDDDDGQGGSRRARPAAAEPAPMHGH. Over residues 105–114 the composition is skewed to low complexity; it reads PAAAEPAPMH. Residues 125–539 are catalytic; that stretch reads DEEIVAAVAS…SSKDVAKAAS (415 aa). E218 functions as the Charge relay system in the catalytic mechanism. N282 carries an N-linked (GlcNAc...) asparagine glycan. Active-site charge relay system residues include K350 and D426. The chain crosses the membrane as a helical span at residues 496 to 516; that stretch reads LATIVAGSVLAGELSLLAALA. H524 acts as the Proton donor in catalysis. An N-linked (GlcNAc...) asparagine glycan is attached at N528.

It belongs to the HMG-CoA reductase family.

It localises to the endoplasmic reticulum membrane. It catalyses the reaction (R)-mevalonate + 2 NADP(+) + CoA = (3S)-3-hydroxy-3-methylglutaryl-CoA + 2 NADPH + 2 H(+). Its pathway is metabolic intermediate biosynthesis; (R)-mevalonate biosynthesis; (R)-mevalonate from acetyl-CoA: step 3/3. In terms of biological role, catalyzes the synthesis of mevalonate. The specific precursor of all isoprenoid compounds present in plants. This is 3-hydroxy-3-methylglutaryl-coenzyme A reductase 1 (HMG1) from Oryza sativa subsp. indica (Rice).